The following is a 500-amino-acid chain: Glycerol kinase (500 aa).

Position 13 (Thr13) interacts with ADP. Residues Thr13, Thr14, and Ser15 each contribute to the ATP site. Residue Thr13 coordinates sn-glycerol 3-phosphate. Arg17 provides a ligand contact to ADP. The sn-glycerol 3-phosphate site is built by Arg83, Glu84, Tyr135, and Asp245. Glycerol is bound by residues Arg83, Glu84, Tyr135, Asp245, and Gln246. Positions 267 and 310 each coordinate ADP. 4 residues coordinate ATP: Thr267, Gly310, Gln314, and Gly411. 2 residues coordinate ADP: Gly411 and Asn415.

This sequence belongs to the FGGY kinase family. In terms of assembly, homotetramer and homodimer (in equilibrium).

The enzyme catalyses glycerol + ATP = sn-glycerol 3-phosphate + ADP + H(+). Its pathway is polyol metabolism; glycerol degradation via glycerol kinase pathway; sn-glycerol 3-phosphate from glycerol: step 1/1. Its activity is regulated as follows. Activated by phosphorylation and inhibited by fructose 1,6-bisphosphate (FBP). Key enzyme in the regulation of glycerol uptake and metabolism. Catalyzes the phosphorylation of glycerol to yield sn-glycerol 3-phosphate. In Lactobacillus acidophilus (strain ATCC 700396 / NCK56 / N2 / NCFM), this protein is Glycerol kinase.